Reading from the N-terminus, the 1276-residue chain is Sterol regulatory element-binding protein cleavage-activating protein (1276 aa).

At 1-18 (MTLTERLREKISQAFYNH) the chain is on the cytoplasmic side. Residues 19 to 39 (GLLCASYPIPIILFTGLCILA) form a helical membrane-spanning segment. Over 40–279 (CCYPLLKLPL…NLVHVHFKEE (240 aa)) the chain is Lumenal. Positions 46–284 (KLPLPGTGPV…HFKEEIGIAE (239 aa)) are loop-1. The disordered stretch occupies residues 60-81 (PVKDYSPPPVDSDHKQGEPSEQ). N-linked (GlcNAc...) asparagine glycosylation is present at Asn263. Residues 280–300 (IGIAELIPLVTTYIILFAYIY) form a helical membrane-spanning segment. One can recognise an SSD domain in the interval 284–442 (ELIPLVTTYI…MFFFTTVLSI (159 aa)). Topologically, residues 301–312 (FSTRKIDMVKSK) are cytoplasmic. The chain crosses the membrane as a helical span at residues 313–333 (WGLALAAVVTVLSSLLMSVGL). Topologically, residues 334 to 344 (CTLFGLTPTLN) are lumenal. The helical transmembrane segment at 345 to 365 (GGEIFPYLVVVIGLENVLVLT) threads the bilayer. The Cytoplasmic portion of the chain corresponds to 366–401 (KSVVSTPVDLEVKLRIAQGLSSESWSIMKNVATELG). The helical transmembrane segment at 402–422 (IILIGYFTLVPAIQEFCLFAV) threads the bilayer. Residue Val423 is a topological domain, lumenal. Residues 424 to 444 (GLVSDFFLQMFFFTTVLSIDI) form a helical membrane-spanning segment. The Cytoplasmic portion of the chain corresponds to 445–518 (RRMELADLNK…FLARTRLAQR (74 aa)). The short motif at 447–452 (MELADL) is the ER export signal element. Glycyl lysine isopeptide (Lys-Gly) (interchain with G-Cter in ubiquitin) cross-links involve residues Lys454 and Lys466. Residues 519–539 (LIMAGTVVWIGILVYTDPAGL) form a helical membrane-spanning segment. The tract at residues 535–710 (DPAGLRTYLA…QAHGDITLYK (176 aa)) is loop-7. Residues 540–708 (RTYLAAQVTE…GTQAHGDITL (169 aa)) are Lumenal-facing. Residues Asn590 and Asn641 are each glycosylated (N-linked (GlcNAc...) asparagine). Residues 709-729 (YKVAALGLAAGIVLVLLLLCL) traverse the membrane as a helical segment. Residues 730 to 1276 (YRVLCPRNYG…YVPSVLEKLD (547 aa)) lie on the Cytoplasmic side of the membrane. The tract at residues 731–1276 (RVLCPRNYGQ…YVPSVLEKLD (546 aa)) is interaction with SREBF2. Residues 771–811 (VLRGHLMDIECLASDGMLLVSCCLAGQVCVWDAQTGDCLTR) form a WD 1 repeat. The tract at residues 816-903 (GSRRDSCGGG…RHRAGCGRAR (88 aa)) is disordered. Ser821, Ser837, Ser843, Ser850, Ser905, and Ser934 each carry phosphoserine. The disordered stretch occupies residues 928–957 (PALRPPSPGSPLPQASQEDGAAPEKGSPPL). 2 WD repeats span residues 949–999 (APEK…LCCS) and 1002–1039 (EVSS…SLSP). The residue at position 1048 (Arg1048) is an Omega-N-methylarginine. WD repeat units follow at residues 1074 to 1111 (AHQK…CLFT), 1114 to 1152 (GHSG…RVSH), 1155 to 1192 (AHRG…KLYS), and 1194 to 1232 (QQDL…LLQT).

It belongs to the WD repeat SCAP family. As to quaternary structure, membrane region forms a homotetramer. Component of the SCAP-SREBP complex (composed of SCAP and SREBF1/SREBP1 or SREBF2/SREBP2); interacts with SREBF1/SREBP1 or SREBF2/SREBP2 through its C-terminal cytoplasmic domain. Forms a ternary complex with INSIG1 or INSIG2 through its transmembrane domains at high sterol concentrations. Interacts with PAQR3; the interaction anchors the SCAP-SREBP complex to the Golgi apparatus in low cholesterol conditions. Interacts with the SEC23-SEC24 complex in a SAR1-GTP-dependent manner through an ER export signal in its third cytoplasmic loop. Interacts with RNF139; the interaction inhibits the interaction of SCAP with SEC24B and hampering the ER to Golgi transport of the SCAP-SREBP complex. Interacts with SPRING. Ubiquitinated at Lys-454 and Lys-466. RNF145 triggers ubiquitination of SCAP, likely inhibiting SCAP-SREBP complex transport to the Golgi apparatus and the subsequent processing/maturation of SREBF2/SREBP2.

Its subcellular location is the endoplasmic reticulum membrane. The protein resides in the golgi apparatus membrane. It is found in the cytoplasmic vesicle. The protein localises to the COPII-coated vesicle membrane. Its function is as follows. Escort protein required for cholesterol as well as lipid homeostasis. Regulates export of the SCAP-SREBP complex from the endoplasmic reticulum to the Golgi upon low cholesterol, thereby regulating the processing of sterol regulatory element-binding proteins (SREBPs) SREBF1/SREBP1 and SREBF2/SREBP2. At high sterol concentrations, formation of a ternary complex with INSIG (INSIG1 or INSIG2) leads to mask the ER export signal in SCAP, promoting retention of the complex in the endoplasmic reticulum. Low sterol concentrations trigger release of INSIG, a conformational change in the SSD domain of SCAP, unmasking of the ER export signal, promoting recruitment into COPII-coated vesicles and transport of the SCAP-SREBP to the Golgi: in the Golgi, SREBPs are then processed, releasing the transcription factor fragment of SREBPs from the membrane, its import into the nucleus and up-regulation of LDLR, INSIG1 and the mevalonate pathway. Binds cholesterol via its SSD domain. This is Sterol regulatory element-binding protein cleavage-activating protein from Cricetulus griseus (Chinese hamster).